We begin with the raw amino-acid sequence, 120 residues long: NAD(P)H-quinone oxidoreductase subunit 3, chloroplastic (120 aa).

The next 3 membrane-spanning stretches (helical) occupy residues 9–29, 64–84, and 88–108; these read IFWAFLIISSAIPILAFLISG, MFALVFVVFDVETVFLYPWAM, and VLGVSVFIEALIFVLILIVGS.

It belongs to the complex I subunit 3 family. In terms of assembly, NDH is composed of at least 16 different subunits, 5 of which are encoded in the nucleus.

The protein localises to the plastid. It localises to the chloroplast thylakoid membrane. The enzyme catalyses a plastoquinone + NADH + (n+1) H(+)(in) = a plastoquinol + NAD(+) + n H(+)(out). It carries out the reaction a plastoquinone + NADPH + (n+1) H(+)(in) = a plastoquinol + NADP(+) + n H(+)(out). In terms of biological role, NDH shuttles electrons from NAD(P)H:plastoquinone, via FMN and iron-sulfur (Fe-S) centers, to quinones in the photosynthetic chain and possibly in a chloroplast respiratory chain. The immediate electron acceptor for the enzyme in this species is believed to be plastoquinone. Couples the redox reaction to proton translocation, and thus conserves the redox energy in a proton gradient. In Carica papaya (Papaya), this protein is NAD(P)H-quinone oxidoreductase subunit 3, chloroplastic.